The following is a 239-amino-acid chain: MGASIDDYCLIHKKILHSEDLLKYILETSAYPREHEQLKGLREVTEKHEWSSALVPADEGLFLSMLIKLMNAKRTIEIGVYTGYSLLTTALALPEDGKITAIDVNKSFFEIGLPFIQKAGVEHKINFIESEALPVLDQMLQETKEEDLYDYAFVDADKSNYANYHERLVKLVRIGGAILYDNTLWYGSVAYPEYPGLHPEEEVARLSFRNLNTFLAADPRVEISQVSIGDGVTICRRLY.

Residues V55, E77, 79-80 (GV), S85, D103, and A132 contribute to the S-adenosyl-L-methionine site. D155 contributes to the a divalent metal cation binding site. D157 lines the S-adenosyl-L-methionine pocket. A divalent metal cation contacts are provided by D181 and N182.

It belongs to the class I-like SAM-binding methyltransferase superfamily. Cation-dependent O-methyltransferase family. Mg(2+) serves as cofactor.

It catalyses the reaction norbelladine + S-adenosyl-L-methionine = 4'-O-methylnorbelladine + S-adenosyl-L-homocysteine + H(+). Its pathway is alkaloid biosynthesis. In terms of biological role, 4'-O-methyltransferase converting norbelladine to 4'-O-methylnorbelladine. 4'-O-methylnorbelladine is a precursor to all Amaryllidaceae alkaloids such as galanthamine, lycorine and haemanthamine, and including haemanthamine- and crinamine-type alkaloids, promising anticancer agents. The polypeptide is Norbelladine 4'-O-methyltransferase 4 (Narcissus aff. pseudonarcissus MK-2014 (Daffodil)).